We begin with the raw amino-acid sequence, 448 residues long: UDP-glycosyltransferase 79B5 (448 aa).

UDP-alpha-D-glucose contacts are provided by residues T261, 320–322 (LEQ), 337–345 (HCGFGSMWE), and 359–362 (LADQ).

Belongs to the UDP-glycosyltransferase family.

The chain is UDP-glycosyltransferase 79B5 (UGT79B5) from Arabidopsis thaliana (Mouse-ear cress).